Reading from the N-terminus, the 337-residue chain is D-alanine--D-alanine ligase (337 aa).

One can recognise an ATP-grasp domain in the interval 124–330 (KMWFSALGIP…FTEYLSLVIN (207 aa)). An ATP-binding site is contributed by 154 to 209 (ALAQWGSIFVKAASQGSSVGCYKVDDSDKVAGVLKDAFGYAPYVIVEKTIKARELE). Aspartate 284, glutamate 297, and asparagine 299 together coordinate Mg(2+).

This sequence belongs to the D-alanine--D-alanine ligase family. The cofactor is Mg(2+). Requires Mn(2+) as cofactor.

Its subcellular location is the cytoplasm. It carries out the reaction 2 D-alanine + ATP = D-alanyl-D-alanine + ADP + phosphate + H(+). The protein operates within cell wall biogenesis; peptidoglycan biosynthesis. Functionally, cell wall formation. This is D-alanine--D-alanine ligase from Shewanella baltica (strain OS195).